Here is a 339-residue protein sequence, read N- to C-terminus: Anthranilate phosphoribosyltransferase (339 aa).

Residues glycine 80, 83–84, threonine 88, 90–93, 108–116, and serine 120 contribute to the 5-phospho-alpha-D-ribose 1-diphosphate site; these read GD, NIST, and KHGNRSVSS. Glycine 80 serves as a coordination point for anthranilate. Serine 92 is a binding site for Mg(2+). Asparagine 111 contributes to the anthranilate binding site. Arginine 166 serves as a coordination point for anthranilate. Mg(2+)-binding residues include aspartate 225 and glutamate 226.

Belongs to the anthranilate phosphoribosyltransferase family. Homodimer. It depends on Mg(2+) as a cofactor.

It carries out the reaction N-(5-phospho-beta-D-ribosyl)anthranilate + diphosphate = 5-phospho-alpha-D-ribose 1-diphosphate + anthranilate. Its pathway is amino-acid biosynthesis; L-tryptophan biosynthesis; L-tryptophan from chorismate: step 2/5. Catalyzes the transfer of the phosphoribosyl group of 5-phosphorylribose-1-pyrophosphate (PRPP) to anthranilate to yield N-(5'-phosphoribosyl)-anthranilate (PRA). This chain is Anthranilate phosphoribosyltransferase, found in Desulfosudis oleivorans (strain DSM 6200 / JCM 39069 / Hxd3) (Desulfococcus oleovorans).